Consider the following 95-residue polypeptide: Aspartyl/glutamyl-tRNA(Asn/Gln) amidotransferase subunit C (95 aa).

Belongs to the GatC family. As to quaternary structure, heterotrimer of A, B and C subunits.

It carries out the reaction L-glutamyl-tRNA(Gln) + L-glutamine + ATP + H2O = L-glutaminyl-tRNA(Gln) + L-glutamate + ADP + phosphate + H(+). The enzyme catalyses L-aspartyl-tRNA(Asn) + L-glutamine + ATP + H2O = L-asparaginyl-tRNA(Asn) + L-glutamate + ADP + phosphate + 2 H(+). In terms of biological role, allows the formation of correctly charged Asn-tRNA(Asn) or Gln-tRNA(Gln) through the transamidation of misacylated Asp-tRNA(Asn) or Glu-tRNA(Gln) in organisms which lack either or both of asparaginyl-tRNA or glutaminyl-tRNA synthetases. The reaction takes place in the presence of glutamine and ATP through an activated phospho-Asp-tRNA(Asn) or phospho-Glu-tRNA(Gln). The polypeptide is Aspartyl/glutamyl-tRNA(Asn/Gln) amidotransferase subunit C (Gluconobacter oxydans (strain 621H) (Gluconobacter suboxydans)).